The following is a 218-amino-acid chain: Ribonuclease HII (218 aa).

An RNase H type-2 domain is found at 13–202; the sequence is DLVAGVDEVG…VRAAHEARAT (190 aa). A divalent metal cation is bound by residues D19, E20, and D111.

Belongs to the RNase HII family. Mn(2+) is required as a cofactor. The cofactor is Mg(2+).

The protein localises to the cytoplasm. The catalysed reaction is Endonucleolytic cleavage to 5'-phosphomonoester.. In terms of biological role, endonuclease that specifically degrades the RNA of RNA-DNA hybrids. The polypeptide is Ribonuclease HII (Pseudomonas syringae pv. syringae (strain B728a)).